A 141-amino-acid chain; its full sequence is Nucleoside diphosphate kinase (141 aa).

Residues Lys11, Phe59, Arg87, Thr93, Arg104, and Asn114 each coordinate ATP. His117 (pros-phosphohistidine intermediate) is an active-site residue.

It belongs to the NDK family. Homotetramer. The cofactor is Mg(2+).

It localises to the cytoplasm. It catalyses the reaction a 2'-deoxyribonucleoside 5'-diphosphate + ATP = a 2'-deoxyribonucleoside 5'-triphosphate + ADP. The catalysed reaction is a ribonucleoside 5'-diphosphate + ATP = a ribonucleoside 5'-triphosphate + ADP. In terms of biological role, major role in the synthesis of nucleoside triphosphates other than ATP. The ATP gamma phosphate is transferred to the NDP beta phosphate via a ping-pong mechanism, using a phosphorylated active-site intermediate. This is Nucleoside diphosphate kinase from Vibrio parahaemolyticus serotype O3:K6 (strain RIMD 2210633).